The chain runs to 192 residues: UPF0312 protein Psyr_0457 (192 aa).

The signal sequence occupies residues 1-23 (MLKKSLAALALGTALLSAGQAMA).

This sequence belongs to the UPF0312 family. Type 1 subfamily.

The protein resides in the periplasm. This chain is UPF0312 protein Psyr_0457, found in Pseudomonas syringae pv. syringae (strain B728a).